We begin with the raw amino-acid sequence, 335 residues long: Glyceraldehyde-3-phosphate dehydrogenase 2 (335 aa).

NAD(+)-binding positions include 13 to 14 (RI), Asp-34, and Met-79. Residues 151–153 (SCT), Thr-182, 211–212 (TG), and Arg-234 each bind D-glyceraldehyde 3-phosphate. Cys-152 (nucleophile) is an active-site residue. Residue Asn-316 coordinates NAD(+).

It belongs to the glyceraldehyde-3-phosphate dehydrogenase family. As to quaternary structure, homotetramer.

It localises to the cytoplasm. It catalyses the reaction D-glyceraldehyde 3-phosphate + phosphate + NAD(+) = (2R)-3-phospho-glyceroyl phosphate + NADH + H(+). It functions in the pathway carbohydrate degradation; glycolysis; pyruvate from D-glyceraldehyde 3-phosphate: step 1/5. Glyceraldehyde-3-phosphate dehydrogenase is a key enzyme in glycolysis that catalyzes the first step of the pathway by converting D-glyceraldehyde 3-phosphate (G3P) into 3-phospho-D-glyceroyl phosphate. This Danio rerio (Zebrafish) protein is Glyceraldehyde-3-phosphate dehydrogenase 2 (gapdh-2).